Consider the following 149-residue polypeptide: HQPANYLICSLAVTDLLVAVLVMPLSIMYIVMDSWRLGYFICEVWLSVDMTCCTCSILHLCVIALDRYWAITNAIEYARKRTAKRAGLMILTVWTISIFISMPPLFWRSHRQLSPPPSQCAIQHDHVIYTIYSTLGAFYIPLTLILILY.

Residues 1–6 (HQPANY) are Extracellular-facing. A helical membrane pass occupies residues 7–31 (LICSLAVTDLLVAVLVMPLSIMYIV). Over 32–39 (MDSWRLGY) the chain is Cytoplasmic. The helical transmembrane segment at 40-65 (FICEVWLSVDMTCCTCSILHLCVIAL) threads the bilayer. Residues C42 and C120 are joined by a disulfide bond. Serotonin contacts are provided by D49 and C53. Positions 66–68 (DRY) match the DRY motif; important for ligand-induced conformation changes motif. Topologically, residues 66–85 (DRYWAITNAIEYARKRTAKR) are extracellular. A helical transmembrane segment spans residues 86–104 (AGLMILTVWTISIFISMPP). Residues 105 to 149 (LFWRSHRQLSPPPSQCAIQHDHVIYTIYSTLGAFYIPLTLILILY) lie on the Cytoplasmic side of the membrane.

The protein belongs to the G-protein coupled receptor 1 family.

Its subcellular location is the cell membrane. Its function is as follows. G-protein coupled receptor for 5-hydroxytryptamine (serotonin). Also functions as a receptor for various alkaloids and psychoactive substances. Ligand binding causes a conformation change that triggers signaling via guanine nucleotide-binding proteins (G proteins) and modulates the activity of downstream effectors, such as adenylate cyclase. HTR1E is coupled to G(i)/G(o) G alpha proteins and mediates inhibitory neurotransmission by inhibiting adenylate cyclase activity. The protein is 5-hydroxytryptamine receptor 1E (HTR1E) of Sus scrofa (Pig).